We begin with the raw amino-acid sequence, 702 residues long: Elongation factor G (702 aa).

Residues 8-290 enclose the tr-type G domain; the sequence is ERYRNIGISA…GVVEYLPSPV (283 aa). GTP contacts are provided by residues 17–24, 88–92, and 142–145; these read AHIDAGKT, DTPGH, and NKMD.

It belongs to the TRAFAC class translation factor GTPase superfamily. Classic translation factor GTPase family. EF-G/EF-2 subfamily.

The protein resides in the cytoplasm. In terms of biological role, catalyzes the GTP-dependent ribosomal translocation step during translation elongation. During this step, the ribosome changes from the pre-translocational (PRE) to the post-translocational (POST) state as the newly formed A-site-bound peptidyl-tRNA and P-site-bound deacylated tRNA move to the P and E sites, respectively. Catalyzes the coordinated movement of the two tRNA molecules, the mRNA and conformational changes in the ribosome. The sequence is that of Elongation factor G from Janthinobacterium sp. (strain Marseille) (Minibacterium massiliensis).